Reading from the N-terminus, the 199-residue chain is MRLILATSNRGKVKEIKALCKDFKVIPYSELIEEFEIIEDASTFKGNALIKARAVFKVLSQKDEYKDMVVLADDSGISVDVLGGAPGIYSARYASKGASDKENLYKLIEDVKKSGAKGSPAHYTAAIAIVTKNYEYSVHGWMYGDVIAEVRGDGGFGYDPMFIPLGYDKTLGELDDDTKKNISHRAKALSLAKIILQTL.

7–12 (TSNRGK) provides a ligand contact to substrate. The active-site Proton acceptor is the Asp74. Asp74 is a Mg(2+) binding site. Substrate contacts are provided by residues Ser75, 156–159 (FGYD), Lys179, and 184–185 (HR).

Belongs to the HAM1 NTPase family. As to quaternary structure, homodimer. The cofactor is Mg(2+).

The enzyme catalyses XTP + H2O = XMP + diphosphate + H(+). It carries out the reaction dITP + H2O = dIMP + diphosphate + H(+). The catalysed reaction is ITP + H2O = IMP + diphosphate + H(+). Pyrophosphatase that catalyzes the hydrolysis of nucleoside triphosphates to their monophosphate derivatives, with a high preference for the non-canonical purine nucleotides XTP (xanthosine triphosphate), dITP (deoxyinosine triphosphate) and ITP. Seems to function as a house-cleaning enzyme that removes non-canonical purine nucleotides from the nucleotide pool, thus preventing their incorporation into DNA/RNA and avoiding chromosomal lesions. This chain is dITP/XTP pyrophosphatase, found in Sulfurimonas denitrificans (strain ATCC 33889 / DSM 1251) (Thiomicrospira denitrificans (strain ATCC 33889 / DSM 1251)).